The following is a 227-amino-acid chain: Cytochrome c oxidase subunit 2 (227 aa).

Residues 1 to 14 (MAYPFQLGLQDATS) lie on the Mitochondrial intermembrane side of the membrane. The chain crosses the membrane as a helical span at residues 15–45 (PIMEELLHFHDHTLMIVFLISSLVLYIISLM). The Mitochondrial matrix segment spans residues 46–59 (LTTKLTHTSTMDAQ). The chain crosses the membrane as a helical span at residues 60–87 (EVETVWTILPAIILILIALPSLRILYMM). The Mitochondrial intermembrane portion of the chain corresponds to 88 to 227 (DEINNPSLTV…YFETWSAVMV (140 aa)). The Cu cation site is built by His161, Cys196, Glu198, Cys200, His204, and Met207. Residue Glu198 participates in Mg(2+) binding. Tyr218 carries the post-translational modification Phosphotyrosine.

The protein belongs to the cytochrome c oxidase subunit 2 family. Component of the cytochrome c oxidase (complex IV, CIV), a multisubunit enzyme composed of 14 subunits. The complex is composed of a catalytic core of 3 subunits MT-CO1, MT-CO2 and MT-CO3, encoded in the mitochondrial DNA, and 11 supernumerary subunits COX4I, COX5A, COX5B, COX6A, COX6B, COX6C, COX7A, COX7B, COX7C, COX8 and NDUFA4, which are encoded in the nuclear genome. The complex exists as a monomer or a dimer and forms supercomplexes (SCs) in the inner mitochondrial membrane with NADH-ubiquinone oxidoreductase (complex I, CI) and ubiquinol-cytochrome c oxidoreductase (cytochrome b-c1 complex, complex III, CIII), resulting in different assemblies (supercomplex SCI(1)III(2)IV(1) and megacomplex MCI(2)III(2)IV(2)). Found in a complex with TMEM177, COA6, COX18, COX20, SCO1 and SCO2. Interacts with TMEM177 in a COX20-dependent manner. Interacts with COX20. Interacts with COX16. Cu cation is required as a cofactor.

The protein resides in the mitochondrion inner membrane. The catalysed reaction is 4 Fe(II)-[cytochrome c] + O2 + 8 H(+)(in) = 4 Fe(III)-[cytochrome c] + 2 H2O + 4 H(+)(out). Its function is as follows. Component of the cytochrome c oxidase, the last enzyme in the mitochondrial electron transport chain which drives oxidative phosphorylation. The respiratory chain contains 3 multisubunit complexes succinate dehydrogenase (complex II, CII), ubiquinol-cytochrome c oxidoreductase (cytochrome b-c1 complex, complex III, CIII) and cytochrome c oxidase (complex IV, CIV), that cooperate to transfer electrons derived from NADH and succinate to molecular oxygen, creating an electrochemical gradient over the inner membrane that drives transmembrane transport and the ATP synthase. Cytochrome c oxidase is the component of the respiratory chain that catalyzes the reduction of oxygen to water. Electrons originating from reduced cytochrome c in the intermembrane space (IMS) are transferred via the dinuclear copper A center (CU(A)) of subunit 2 and heme A of subunit 1 to the active site in subunit 1, a binuclear center (BNC) formed by heme A3 and copper B (CU(B)). The BNC reduces molecular oxygen to 2 water molecules using 4 electrons from cytochrome c in the IMS and 4 protons from the mitochondrial matrix. In Lycalopex sechurae (Sechuran desert fox), this protein is Cytochrome c oxidase subunit 2 (MT-CO2).